A 471-amino-acid chain; its full sequence is Cytochrome P450 monooxygenase afvE (471 aa).

The chain crosses the membrane as a helical span at residues 265 to 285 (IIFYHFELSTPVAFFIIFAVY). Residue Cys410 coordinates heme.

This sequence belongs to the cytochrome P450 family. The cofactor is heme.

It localises to the membrane. Its pathway is secondary metabolite biosynthesis. Cytochrome P450 monooxygenase; part of the gene cluster that mediates the biosynthesis of aflavarin, a bicoumarin that exhibits anti-insectan activity against the fungivorous beetle C.hemipterus. This Aspergillus flavus (strain ATCC 200026 / FGSC A1120 / IAM 13836 / NRRL 3357 / JCM 12722 / SRRC 167) protein is Cytochrome P450 monooxygenase afvE.